A 120-amino-acid chain; its full sequence is Small ribosomal subunit protein uS13m (120 aa).

Belongs to the universal ribosomal protein uS13 family. In terms of assembly, part of the small ribosomal subunit.

The protein resides in the mitochondrion. In terms of biological role, located at the top of the head of the small subunit, it contacts several helices of the 18S rRNA. The protein is Small ribosomal subunit protein uS13m (RPS13) of Marchantia polymorpha (Common liverwort).